An 83-amino-acid chain; its full sequence is MIMDTSLKNNDGALEADNKNYQDYKAEPDKTSDVLDVTKYNSVVDCCHKNYSTFTSEWYINERKYNDVPEGPKKAVVHRCTIL.

The protein belongs to the asfivirus L83L family. Interacts with host IL1B.

The protein localises to the host cytoplasm. May subvert the host innate immune response by interacting with host IL1B and interfering with its function. This is Protein L83L from Ornithodoros (relapsing fever ticks).